The following is a 387-amino-acid chain: Succinate--CoA ligase [ADP-forming] subunit beta (387 aa).

The ATP-grasp domain occupies Lys-9–Leu-244. ATP contacts are provided by residues Lys-46, Gly-53 to Gly-55, Gly-102, and Glu-107. The Mg(2+) site is built by Asn-199 and Asp-213. Residues Asn-264 and Gly-321–Val-323 each bind substrate.

This sequence belongs to the succinate/malate CoA ligase beta subunit family. As to quaternary structure, heterotetramer of two alpha and two beta subunits. Mg(2+) serves as cofactor.

It carries out the reaction succinate + ATP + CoA = succinyl-CoA + ADP + phosphate. The catalysed reaction is GTP + succinate + CoA = succinyl-CoA + GDP + phosphate. It functions in the pathway carbohydrate metabolism; tricarboxylic acid cycle; succinate from succinyl-CoA (ligase route): step 1/1. Its function is as follows. Succinyl-CoA synthetase functions in the citric acid cycle (TCA), coupling the hydrolysis of succinyl-CoA to the synthesis of either ATP or GTP and thus represents the only step of substrate-level phosphorylation in the TCA. The beta subunit provides nucleotide specificity of the enzyme and binds the substrate succinate, while the binding sites for coenzyme A and phosphate are found in the alpha subunit. The polypeptide is Succinate--CoA ligase [ADP-forming] subunit beta (Xylella fastidiosa (strain M23)).